A 502-amino-acid chain; its full sequence is Cytochrome P450 CYP94D109 (502 aa).

The chain crosses the membrane as a helical span at residues 3 to 23 (SLSLIFISFITLIVFLVVSAS). Cys-437 provides a ligand contact to heme.

It belongs to the cytochrome P450 family. As to expression, mainly expressed in leaves and, at low levels, in roots, fruits and stems.

The protein localises to the membrane. It functions in the pathway steroid metabolism; cholesterol metabolism. In terms of biological role, involved in the biosynthesis of spiroketal steroid and saponin natural products from cholesterol such as diosgenin and analogs (e.g. furostanol and spirostanol), plant defense compounds used as main precursors for the industrial production of steroid hormones. During the 5,6-spiroketalization of cholesterol, may catalyze the 27-monohydroxylation of furostanol-type steroid to an intermediate product that undergoes a stereospecific formation of the terminal heterocycle to yield diosgenin. This Paris polyphylla (Daiswa polyphylla) protein is Cytochrome P450 CYP94D109.